A 376-amino-acid polypeptide reads, in one-letter code: Succinyl-diaminopimelate desuccinylase (376 aa).

His-67 lines the Zn(2+) pocket. The active site involves Asp-69. Zn(2+) is bound at residue Asp-100. The active-site Proton acceptor is Glu-134. Zn(2+) contacts are provided by Glu-135, Glu-163, and His-349.

The protein belongs to the peptidase M20A family. DapE subfamily. As to quaternary structure, homodimer. It depends on Zn(2+) as a cofactor. The cofactor is Co(2+).

It catalyses the reaction N-succinyl-(2S,6S)-2,6-diaminopimelate + H2O = (2S,6S)-2,6-diaminopimelate + succinate. The protein operates within amino-acid biosynthesis; L-lysine biosynthesis via DAP pathway; LL-2,6-diaminopimelate from (S)-tetrahydrodipicolinate (succinylase route): step 3/3. Functionally, catalyzes the hydrolysis of N-succinyl-L,L-diaminopimelic acid (SDAP), forming succinate and LL-2,6-diaminopimelate (DAP), an intermediate involved in the bacterial biosynthesis of lysine and meso-diaminopimelic acid, an essential component of bacterial cell walls. In Nitrosomonas europaea (strain ATCC 19718 / CIP 103999 / KCTC 2705 / NBRC 14298), this protein is Succinyl-diaminopimelate desuccinylase.